Reading from the N-terminus, the 397-residue chain is Argininosuccinate synthase (397 aa).

An ATP-binding site is contributed by 8–16; the sequence is AYSGGLDTS. Tyrosine 87 is a binding site for L-citrulline. Residue glycine 117 participates in ATP binding. Residues threonine 119, asparagine 123, and aspartate 124 each coordinate L-aspartate. Residue asparagine 123 coordinates L-citrulline. 4 residues coordinate L-citrulline: arginine 127, serine 175, glutamate 259, and tyrosine 271.

The protein belongs to the argininosuccinate synthase family. Type 1 subfamily. As to quaternary structure, homotetramer.

It is found in the cytoplasm. It carries out the reaction L-citrulline + L-aspartate + ATP = 2-(N(omega)-L-arginino)succinate + AMP + diphosphate + H(+). Its pathway is amino-acid biosynthesis; L-arginine biosynthesis; L-arginine from L-ornithine and carbamoyl phosphate: step 2/3. The polypeptide is Argininosuccinate synthase (Streptomyces clavuligerus).